Consider the following 597-residue polypeptide: Aspartate--tRNA(Asp/Asn) ligase (597 aa).

Glu-175 is an L-aspartate binding site. Residues 199–202 are aspartate; sequence QQYK. L-aspartate-binding residues include Arg-221 and His-454. Residue 221-223 coordinates ATP; the sequence is RDE. An ATP-binding site is contributed by Glu-488. An L-aspartate-binding site is contributed by Arg-495. Residue 540-543 coordinates ATP; sequence GVDR.

This sequence belongs to the class-II aminoacyl-tRNA synthetase family. Type 1 subfamily. As to quaternary structure, homodimer.

The protein resides in the cytoplasm. It carries out the reaction tRNA(Asx) + L-aspartate + ATP = L-aspartyl-tRNA(Asx) + AMP + diphosphate. Its function is as follows. Aspartyl-tRNA synthetase with relaxed tRNA specificity since it is able to aspartylate not only its cognate tRNA(Asp) but also tRNA(Asn). Reaction proceeds in two steps: L-aspartate is first activated by ATP to form Asp-AMP and then transferred to the acceptor end of tRNA(Asp/Asn). This chain is Aspartate--tRNA(Asp/Asn) ligase, found in Bartonella quintana (strain Toulouse) (Rochalimaea quintana).